An 891-amino-acid chain; its full sequence is von Willebrand factor A domain-containing protein 7 (891 aa).

Residues 1-28 (MLPVEVPLSHLGPPILLLLQLLLPPTSA) form the signal peptide. The N-linked (GlcNAc...) asparagine glycan is linked to Asn55. The interval 238 to 273 (PKPPGKCSHGGHFDQSSSQPPRGGINKDSTSPSFSP) is disordered. Residues 314–499 (ASSLSFVLDT…DVAAIVGESM (186 aa)) form the VWFA domain.

In terms of tissue distribution, expressed at low level in many tissues.

It is found in the secreted. This chain is von Willebrand factor A domain-containing protein 7 (Vwa7), found in Mus musculus (Mouse).